The chain runs to 103 residues: MFRPFLNSLMLGSLFFPFIAIAGSTVQGGVIHFYGQIVEPACDVSTQSSPVEMNCPQNGSIPGKTYSSKALMSGNVKNAQIASVKVQYLDKQKKLAVMNIEYN.

The first 22 residues, 1–22, serve as a signal peptide directing secretion; the sequence is MFRPFLNSLMLGSLFFPFIAIA.

This sequence to the N-terminal of the FimA/PapA family of fimbria proteins.

This is an uncharacterized protein from Escherichia coli (strain K12).